We begin with the raw amino-acid sequence, 64 residues long: Large ribosomal subunit protein uL29 (64 aa).

This sequence belongs to the universal ribosomal protein uL29 family.

This Psychrobacter sp. (strain PRwf-1) protein is Large ribosomal subunit protein uL29.